Here is a 548-residue protein sequence, read N- to C-terminus: Chaperonin GroEL (548 aa).

ATP-binding positions include 30-33 (TLGP), K51, 87-91 (DGTTT), G415, and D496. A disordered region spans residues 527 to 548 (SDKEDAMPPMRGGMGGMGGMDF). Over residues 538-548 (GGMGGMGGMDF) the composition is skewed to gly residues.

The protein belongs to the chaperonin (HSP60) family. Forms a cylinder of 14 subunits composed of two heptameric rings stacked back-to-back. Interacts with the co-chaperonin GroES.

It is found in the cytoplasm. The enzyme catalyses ATP + H2O + a folded polypeptide = ADP + phosphate + an unfolded polypeptide.. In terms of biological role, together with its co-chaperonin GroES, plays an essential role in assisting protein folding. The GroEL-GroES system forms a nano-cage that allows encapsulation of the non-native substrate proteins and provides a physical environment optimized to promote and accelerate protein folding. This Rickettsia akari (strain Hartford) protein is Chaperonin GroEL.